A 281-amino-acid chain; its full sequence is Apulose-4-phosphate transketolase subunit A (281 aa).

This sequence belongs to the transketolase family. As to quaternary structure, probable heterodimer composed of AptA and AptB. The cofactor is thiamine diphosphate.

The catalysed reaction is apulose 4-phosphate + D-glyceraldehyde 3-phosphate = D-xylulose 5-phosphate + dihydroxyacetone phosphate. It participates in carbohydrate metabolism. Functionally, involved in catabolism of D-apiose. Catalyzes the transfer of the glycolaldehyde group from apulose-4-phosphate to D-glyceraldehyde 3-phosphate, generating dihydroxyacetone phosphate and D-xylulose-5-phosphate. In Phocaeicola vulgatus (strain ATCC 8482 / DSM 1447 / JCM 5826 / CCUG 4940 / NBRC 14291 / NCTC 11154) (Bacteroides vulgatus), this protein is Apulose-4-phosphate transketolase subunit A.